A 356-amino-acid chain; its full sequence is MKIQDFDFDLPPELIAQFPAEKRGNSRMLHLDATSGALQDRMFADLPSYLRPGDVIVFNDTRVIKARLYGVRDTGGRVEVLVERVLDSHCALAAIRASHSPKPGSKLFLAGAIEVTVLSREHGFYILQFEHESGVMELLERYGNLPLPPYISRPVEKSDELRYQTVYAARPGAVAAPTAGLHFDEHMLGLLRKMGVVMAHVTLHVGSGTFQPVRVENIADHRMHSEVFYVSAETVECIRHAKAEGGRVLAVGTTSLRALEAAAAFAGERAEADNGDGVRIKCGAGETDIFITPGYQFRVVDCLLTNFHLPRSTLLMLVSAFGGVENIRCAYRHAIKERYRFFSFGDAMLIGRAEGI.

It belongs to the QueA family. As to quaternary structure, monomer.

The protein localises to the cytoplasm. The catalysed reaction is 7-aminomethyl-7-carbaguanosine(34) in tRNA + S-adenosyl-L-methionine = epoxyqueuosine(34) in tRNA + adenine + L-methionine + 2 H(+). It functions in the pathway tRNA modification; tRNA-queuosine biosynthesis. Functionally, transfers and isomerizes the ribose moiety from AdoMet to the 7-aminomethyl group of 7-deazaguanine (preQ1-tRNA) to give epoxyqueuosine (oQ-tRNA). The polypeptide is S-adenosylmethionine:tRNA ribosyltransferase-isomerase (Nitrosospira multiformis (strain ATCC 25196 / NCIMB 11849 / C 71)).